A 182-amino-acid polypeptide reads, in one-letter code: Transcription termination/antitermination protein NusG (182 aa).

It belongs to the NusG family.

In terms of biological role, participates in transcription elongation, termination and antitermination. The polypeptide is Transcription termination/antitermination protein NusG (Chlamydia muridarum (strain MoPn / Nigg)).